The chain runs to 244 residues: 1-(5-phosphoribosyl)-5-[(5-phosphoribosylamino)methylideneamino] imidazole-4-carboxamide isomerase (244 aa).

Aspartate 8 functions as the Proton acceptor in the catalytic mechanism. Catalysis depends on aspartate 129, which acts as the Proton donor.

Belongs to the HisA/HisF family.

The protein localises to the cytoplasm. The enzyme catalyses 1-(5-phospho-beta-D-ribosyl)-5-[(5-phospho-beta-D-ribosylamino)methylideneamino]imidazole-4-carboxamide = 5-[(5-phospho-1-deoxy-D-ribulos-1-ylimino)methylamino]-1-(5-phospho-beta-D-ribosyl)imidazole-4-carboxamide. The protein operates within amino-acid biosynthesis; L-histidine biosynthesis; L-histidine from 5-phospho-alpha-D-ribose 1-diphosphate: step 4/9. This is 1-(5-phosphoribosyl)-5-[(5-phosphoribosylamino)methylideneamino] imidazole-4-carboxamide isomerase from Allorhizobium ampelinum (strain ATCC BAA-846 / DSM 112012 / S4) (Agrobacterium vitis (strain S4)).